We begin with the raw amino-acid sequence, 230 residues long: UPF0173 metal-dependent hydrolase RSKD131_0588 (230 aa).

It belongs to the UPF0173 family.

The polypeptide is UPF0173 metal-dependent hydrolase RSKD131_0588 (Cereibacter sphaeroides (strain KD131 / KCTC 12085) (Rhodobacter sphaeroides)).